A 1120-amino-acid polypeptide reads, in one-letter code: Phosphatidylinositide phosphatase SAC2 (1120 aa).

The SAC domain maps to 167–518 (YKIFMDSDSF…GDTISRQYAG (352 aa)). Residues 593–760 (RGAQEQVSLL…RHSKPHEDIM (168 aa)) form the hSac2 domain. Disordered stretches follow at residues 837–881 (SSLE…SREN) and 979–1008 (PAPK…LPRP). Basic and acidic residues predominate over residues 851 to 860 (LKDHGPHSEE). Composition is skewed to polar residues over residues 864–879 (DSDS…SGSR) and 998–1007 (SSHSQNQLPR).

Its subcellular location is the membrane. The protein localises to the clathrin-coated pit. It is found in the early endosome. It localises to the recycling endosome. It catalyses the reaction a myo-inositol phosphate + H2O = myo-inositol + phosphate. Inositol 4-phosphatase which mainly acts on phosphatidylinositol 4-phosphate. May be functionally linked to OCRL, which converts phosphatidylinositol 4,5-bisphosphate to phosphatidylinositol, for a sequential dephosphorylation of phosphatidylinositol 4,5-bisphosphate at the 5 and 4 position of inositol, thus playing an important role in the endocytic recycling. The protein is Phosphatidylinositide phosphatase SAC2 of Danio rerio (Zebrafish).